Consider the following 252-residue polypeptide: Mitochondrial peculiar membrane protein 1 (252 aa).

The disordered stretch occupies residues 230 to 252 (TTTTSKGSSPQVKHKVVSVDEDN).

Its subcellular location is the mitochondrion membrane. The protein is Mitochondrial peculiar membrane protein 1 (MPM1) of Saccharomyces cerevisiae (strain ATCC 204508 / S288c) (Baker's yeast).